A 645-amino-acid chain; its full sequence is ATP-dependent DNA helicase Rep (645 aa).

Positions 1–280 (MSLNFSQKNA…IKMEHNYRSS (280 aa)) constitute a UvrD-like helicase ATP-binding domain. ATP contacts are provided by residues 22–29 (AGAGSGKT) and arginine 278. Residues 281–562 (GRILKAANSL…QLMTLHASKG (282 aa)) enclose the UvrD-like helicase C-terminal domain.

It belongs to the helicase family. UvrD subfamily. Homodimer.

It carries out the reaction Couples ATP hydrolysis with the unwinding of duplex DNA by translocating in the 3'-5' direction.. The catalysed reaction is ATP + H2O = ADP + phosphate + H(+). Functionally, rep helicase is a single-stranded DNA-dependent ATPase involved in DNA replication; it can initiate unwinding at a nick in the DNA. It binds to the single-stranded DNA and acts in a progressive fashion along the DNA in the 3' to 5' direction. The chain is ATP-dependent DNA helicase Rep from Buchnera aphidicola subsp. Acyrthosiphon pisum (strain APS) (Acyrthosiphon pisum symbiotic bacterium).